An 86-amino-acid polypeptide reads, in one-letter code: Large ribosomal subunit protein bL27 (86 aa).

The tract at residues 1–31 (MAHKKAGGSSRNGRDSAGQRRGVKKFGGEPV) is disordered.

The protein belongs to the bacterial ribosomal protein bL27 family.

This is Large ribosomal subunit protein bL27 from Desulfotalea psychrophila (strain LSv54 / DSM 12343).